The primary structure comprises 993 residues: Serine/threonine-protein phosphatase 6 regulatory ankyrin repeat subunit B (993 aa).

ANK repeat units lie at residues 7 to 36 (CEQPPLVQAIFSGDPEEIRMLIHKTEDVNA), 40 to 69 (EKRTPLHVAAFLGDAEIIELLILSGARVNA), 73 to 102 (MWLTPLHRAVASRSEEAVQVLIKHSADVNA), 106 to 135 (NWQTPLHVAAANKAVKCAEVIIPLLSSVNV), 139 to 168 (GGRTALHHAALNGHMEMVNLLLAKGANINA), 172 to 201 (KDRRALHWAAYMGHLDVVALLINHGAEVTC), 205 to 234 (KGYTPLHAAASNGQISVVKHLLNLGVEIDE), 238 to 267 (YGNTALHIACYNGQDAVVNELIDYGANVNQ), 271 to 301 (SGFTPLHFAAASTHGALCLELLVNNGADVNI), 305 to 334 (DGKSPLHMTAVHGRFTRSQTLIQNGGEIDC), 338 to 367 (DGNTPLHVAARHGHELLINTLITSGADTAK), 371 to 400 (HSMFPLHLAALNAHSDCCRKLLSSGFEIDT), 404 to 433 (FGRTCLHAAAAGGNVECIKLLQSSGADFHK), 437 to 466 (CGRTPLHYAAANCHFHCIKALVTTGANVNE), 470 to 498 (WGRTALHYAAASDMDRNKMILGNAHDNSE), 531 to 561 (EGYNSIHYAAAYGHRQCLELLLERTNTGFEE), 566 to 595 (ALKSPLHLAAYNGHHQALEVLLQSLVDLDI), 599 to 628 (KGRTALYLAAFKGHTECVEALVNQGASIFV), 633 to 662 (TKRTPLHASVINGHTLCLRLLLETADNPEV), 669 to 698 (KGQTPLMLAVAYGHIDAVSLLLEKEANVDA), 702 to 731 (VGCTALHRGIMTGHEECVQMLLEQEASILC), 735 to 764 (RGRTPLHYAAARGHATWLNELLQIALSEED), 771 to 800 (QGYTPLHWACYNGNENCIEVLLEQKCFRKF), 803 to 832 (NPFTPLHCAIINGHESCASLLLGAIDPSIV), 838 to 867 (KGRTTLHAAAFGDHAECLQLLLRHDAQVNA), 871 to 901 (SGKTALMMAAENGQAGAVDILVNSAQADLTV), 905 to 934 (DLNTPLHLAISKGHEKCALLILDKIQDESL), and 941 to 970 (ALQTPLHIAARNGLKVVVEELLAKGACVLA). The tract at residues 974–993 (NASRSNGPRSPPGTAVRKEE) is disordered.

In terms of assembly, protein phosphatase 6 (PP6) holoenzyme is proposed to be a heterotrimeric complex formed by the catalytic subunit, a SAPS domain-containing subunit (PP6R) and an ankyrin repeat-domain containing regulatory subunit (ARS). Interacts with PPP6R1.

In terms of biological role, putative regulatory subunit of protein phosphatase 6 (PP6) that may be involved in the recognition of phosphoprotein substrates. The sequence is that of Serine/threonine-protein phosphatase 6 regulatory ankyrin repeat subunit B (Ankrd44) from Mus musculus (Mouse).